The following is a 218-amino-acid chain: Thiopurine S-methyltransferase (218 aa).

Positions 10, 45, 66, and 123 each coordinate S-adenosyl-L-methionine.

This sequence belongs to the class I-like SAM-binding methyltransferase superfamily. TPMT family.

The protein resides in the cytoplasm. It catalyses the reaction S-adenosyl-L-methionine + a thiopurine = S-adenosyl-L-homocysteine + a thiopurine S-methylether.. The chain is Thiopurine S-methyltransferase from Shewanella amazonensis (strain ATCC BAA-1098 / SB2B).